The chain runs to 576 residues: Arginine--tRNA ligase (576 aa).

Positions 122 to 132 (PNVAKEMHVGH) match the 'HIGH' region motif.

It belongs to the class-I aminoacyl-tRNA synthetase family. In terms of assembly, monomer.

The protein resides in the cytoplasm. It catalyses the reaction tRNA(Arg) + L-arginine + ATP = L-arginyl-tRNA(Arg) + AMP + diphosphate. This chain is Arginine--tRNA ligase, found in Hamiltonella defensa subsp. Acyrthosiphon pisum (strain 5AT).